Here is a 91-residue protein sequence, read N- to C-terminus: DNA-directed RNA polymerase subunit omega (91 aa).

The protein belongs to the RNA polymerase subunit omega family. In terms of assembly, the RNAP catalytic core consists of 2 alpha, 1 beta, 1 beta' and 1 omega subunit. When a sigma factor is associated with the core the holoenzyme is formed, which can initiate transcription.

The catalysed reaction is RNA(n) + a ribonucleoside 5'-triphosphate = RNA(n+1) + diphosphate. Promotes RNA polymerase assembly. Latches the N- and C-terminal regions of the beta' subunit thereby facilitating its interaction with the beta and alpha subunits. The polypeptide is DNA-directed RNA polymerase subunit omega (Pectobacterium carotovorum subsp. carotovorum (strain PC1)).